The sequence spans 289 residues: Phosphoribulokinase (289 aa).

12–20 (GSSGAGTTT) contacts ATP.

This sequence belongs to the phosphoribulokinase family.

It carries out the reaction D-ribulose 5-phosphate + ATP = D-ribulose 1,5-bisphosphate + ADP + H(+). It functions in the pathway carbohydrate biosynthesis; Calvin cycle. This chain is Phosphoribulokinase (cbbP), found in Sinorhizobium medicae (strain WSM419) (Ensifer medicae).